The following is a 651-amino-acid chain: Acetyl-coenzyme A synthetase (651 aa).

Residues 189 to 192 (RGGK), threonine 311, and asparagine 335 contribute to the CoA site. ATP is bound by residues 387 to 389 (GEP), 411 to 416 (DTWWQT), aspartate 500, and arginine 515. CoA is bound at residue serine 523. Position 526 (arginine 526) interacts with ATP. Positions 537, 539, and 542 each coordinate Mg(2+). Residue arginine 584 participates in CoA binding. Lysine 609 is modified (N6-acetyllysine).

It belongs to the ATP-dependent AMP-binding enzyme family. Mg(2+) is required as a cofactor. In terms of processing, acetylated. Deacetylation by the SIR2-homolog deacetylase activates the enzyme.

The catalysed reaction is acetate + ATP + CoA = acetyl-CoA + AMP + diphosphate. Catalyzes the conversion of acetate into acetyl-CoA (AcCoA), an essential intermediate at the junction of anabolic and catabolic pathways. AcsA undergoes a two-step reaction. In the first half reaction, AcsA combines acetate with ATP to form acetyl-adenylate (AcAMP) intermediate. In the second half reaction, it can then transfer the acetyl group from AcAMP to the sulfhydryl group of CoA, forming the product AcCoA. The polypeptide is Acetyl-coenzyme A synthetase (Rhizobium leguminosarum bv. trifolii (strain WSM2304)).